The primary structure comprises 424 residues: Probable biofilm formation methyltransferase WspC (424 aa).

The region spanning 1 to 263 is the CheR-type methyltransferase domain; the sequence is MNEQRFFRFL…IAQSFAYVRH (263 aa). S-adenosyl-L-methionine is bound by residues Thr-68, Arg-72, Glu-109, Asp-133, 187 to 188, and 206 to 207; these read NV and RN. One copy of the TPR repeat lies at 355 to 388; the sequence is AQVYYWLGLLSDTEGDAQQALSHYRKALYLEPQH.

In terms of assembly, monomer. The TPR repeat does not mediate self-association.

In terms of biological role, involved in biofilm formation. This chain is Probable biofilm formation methyltransferase WspC (wspC), found in Pseudomonas putida (strain ATCC 47054 / DSM 6125 / CFBP 8728 / NCIMB 11950 / KT2440).